Here is a 672-residue protein sequence, read N- to C-terminus: Protein seu-1 (672 aa).

Disordered regions lie at residues 1-463 (MSSI…AGTE) and 576-672 (LAPP…LKHL). Basic and acidic residues predominate over residues 8–20 (NDNRRPTFRDHRT). Residues 25–34 (GRGGSGGGGR) show a composition bias toward gly residues. Positions 62–85 (RSQDHRQRSPEVRRHRSPEKESKD) are enriched in basic and acidic residues. Residues 87–105 (VVTSTGSSRGATSASVTSS) are compositionally biased toward low complexity. 4 stretches are compositionally biased toward basic and acidic residues: residues 107 to 138 (RRHESGERHRETHRREDKEKKPEKSTDRDADR), 189 to 226 (VSRHSENRRKSSSDVSRRHGDKEKRDRKREDVKKKSNG), 234 to 268 (RRREEDHKRKSESSRKEKKDEDVKEKVVDENKVED), and 289 to 306 (EQAKEHGSDEPERPESHQ). The segment covering 307-317 (SAHSAAVSNAS) has biased composition (low complexity). Residues 322-343 (SEEELDYEEDDIDVDLDGDIDV) show a composition bias toward acidic residues. 6 stretches are compositionally biased toward basic and acidic residues: residues 366 to 375 (NDVKDETMEE), 382 to 396 (PEKKKPRTSENDDKD), 410 to 424 (RREDDKDRRQSSDHH), 436 to 447 (RATDHKESRRSE), 607 to 626 (SFGDRGNRSDEHHGGSRHMD), and 636 to 659 (DHRVRDDGRRVSSFEDRKRPERGF).

In terms of tissue distribution, highly expressed in intestinal cells, lateral hypodermal (seam) cells, Pn.p ventral hypodermal cells, and spermatheca. Expressed at low levels in the ventral nerve cord.

Its subcellular location is the nucleus. Its function is as follows. Together with unc-5, involved in touch neuron axon guidance. During gonad morphogenesis, plays a role in the unc-5-/unc-6-mediated migration of distal tip cells along the body. The polypeptide is Protein seu-1 (Caenorhabditis elegans).